A 434-amino-acid polypeptide reads, in one-letter code: UDP-glucuronate 4-epimerase 2 (434 aa).

Transmembrane regions (helical) follow at residues 32–52 (SVAK…IFFY) and 91–111 (GVSV…SAAL). 93–124 (SVLVTGAAGFVGTHVSAALKRRGDGVLGLDNF) is a binding site for NAD(+). Tyr-243 (proton acceptor) is an active-site residue.

The protein belongs to the NAD(P)-dependent epimerase/dehydratase family. In terms of assembly, homodimer. In roots, leaves, siliques, flowers, pollen and stems.

Its subcellular location is the golgi apparatus. The protein resides in the golgi stack membrane. It catalyses the reaction UDP-alpha-D-glucuronate = UDP-alpha-D-galacturonate. Functionally, involved in the synthesis of the negatively charged monosaccharide that forms the backbone of pectic cell wall components. This is UDP-glucuronate 4-epimerase 2 (GAE2) from Arabidopsis thaliana (Mouse-ear cress).